We begin with the raw amino-acid sequence, 727 residues long: DNA replication licensing factor MCM5 (727 aa).

The MCM domain occupies Val-325 to Ile-531. Residue Gly-375 to Ser-382 coordinates ATP. Positions Ser-507–Asp-510 match the Arginine finger motif.

This sequence belongs to the MCM family. As to quaternary structure, component of the minichromosome maintenance (MCM) complex, a heterotetramer composed of MCM2, MCM3, MCM4, MCM5, MCM6 and MCM7. Interacts with EGT1. In terms of tissue distribution, expressed in shoot apex and flower buds.

The protein localises to the nucleus. The protein resides in the cytoplasm. It catalyses the reaction ATP + H2O = ADP + phosphate + H(+). Probable component of the MCM2-7 complex (MCM complex) that may function as a DNA helicase and which is essential to undergo a single round of replication initiation and elongation per cell cycle in eukaryotic cells. The sequence is that of DNA replication licensing factor MCM5 (MCM5) from Arabidopsis thaliana (Mouse-ear cress).